Reading from the N-terminus, the 380-residue chain is GDP-mannose:cellobiosyl-diphosphopolyprenol alpha-mannosyltransferase (380 aa).

Belongs to the glycosyltransferase group 1 family. Glycosyltransferase 4 subfamily.

The enzyme catalyses beta-D-Glc-(1-&gt;4)-alpha-D-Glc-di-trans,octa-cis-undecaprenyl diphosphate + GDP-alpha-D-mannose = alpha-D-Man-(1-&gt;3)-beta-D-Glc-(1-&gt;4)-alpha-D-Glc-1-di-trans,octa-cis-undecaprenyl diphosphate + GDP + H(+). Its function is as follows. Involved in the biosynthesis of the exopolysaccharide xanthan, a polymer that is comprised of repeating pentasaccharide units with the structure of a beta-(1,4)-linked D-glucose backbone with trisaccharide side chains composed of mannose-beta-(1,4)-glucuronic acid-beta-(1,2)-mannose attached to alternate glucose residues in the backbone by alpha-(1,3) linkages. Xanthan is involved in pathogenicity but has also been used in a variety of applications as a specialty polymer for commercial applications, including food additives, where they act as viscosifying, stabilizing, emulsifying, or gelling agents. This chain is GDP-mannose:cellobiosyl-diphosphopolyprenol alpha-mannosyltransferase (gumH), found in Xanthomonas campestris.